Consider the following 390-residue polypeptide: Putative gustatory receptor 59d (390 aa).

The Cytoplasmic portion of the chain corresponds to 1–38 (MADLLKLCLRIAYAYGRLTGVINFKIDLKTGQALVTRG). The helical transmembrane segment at 39–59 (ATLISVSTHLLIFALLLYQTM) threads the bilayer. At 60–75 (RKSVVNVMWKYANSLH) the chain is on the extracellular side. A helical membrane pass occupies residues 76-96 (EYVFLVIAGFRVVCVFLELVS). Over 97 to 128 (RWSQRRTFVRLFNSFRRLYQRNPDIIQYCRRS) the chain is Cytoplasmic. The chain crosses the membrane as a helical span at residues 129 to 149 (IVSKFFCVTMTETLHIIVTLA). Residues 150–156 (MMRNRLS) lie on the Extracellular side of the membrane. The chain crosses the membrane as a helical span at residues 157–177 (IALALRIWAVLSLTAIINVII). Topologically, residues 178 to 252 (TQYYVATACV…NLSTAYEGEV (75 aa)) are cytoplasmic. The chain crosses the membrane as a helical span at residues 253–273 (VCLVITYYLNMLGTSYLLFSI). Topologically, residues 274–283 (SKYGNFGNNL) are extracellular. Residues 284-304 (LVIITLCGIVYFVFYVVDCWI) form a helical membrane-spanning segment. The Cytoplasmic portion of the chain corresponds to 305 to 366 (NAFNVFYLLD…MYGLFEFGRG (62 aa)). The chain crosses the membrane as a helical span at residues 367-383 (TSFAVFNSLLTHSLLLI). Over 384-390 (QYDVQNF) the chain is Extracellular.

The protein belongs to the insect chemoreceptor superfamily. Gustatory receptor (GR) family. Gr22e subfamily. As to expression, expressed in the adult labellar chemosensory neurons. In larvae, is expressed in neurons of the terminal external chemosensory organ as well as in the dorsal pharyngeal sense organ.

It is found in the cell membrane. Its function is as follows. Probable gustatory receptor which mediates acceptance or avoidance behavior, depending on its substrates. This is Putative gustatory receptor 59d (Gr59d) from Drosophila melanogaster (Fruit fly).